Reading from the N-terminus, the 392-residue chain is Formate-dependent phosphoribosylglycinamide formyltransferase (392 aa).

N(1)-(5-phospho-beta-D-ribosyl)glycinamide contacts are provided by residues 22 to 23 (EL) and Glu-82. ATP-binding positions include Arg-114, Lys-155, 160–165 (SSGHGQ), 195–198 (EGFI), and Glu-203. Residues 119–307 (RLAAEELGLK…QFALHARAIL (189 aa)) form the ATP-grasp domain. Residues Glu-266 and Glu-278 each coordinate Mg(2+). N(1)-(5-phospho-beta-D-ribosyl)glycinamide-binding positions include Asp-285, Lys-355, and 362–363 (RR).

It belongs to the PurK/PurT family. In terms of assembly, homodimer.

The protein resides in the cell inner membrane. It carries out the reaction N(1)-(5-phospho-beta-D-ribosyl)glycinamide + formate + ATP = N(2)-formyl-N(1)-(5-phospho-beta-D-ribosyl)glycinamide + ADP + phosphate + H(+). It participates in purine metabolism; IMP biosynthesis via de novo pathway; N(2)-formyl-N(1)-(5-phospho-D-ribosyl)glycinamide from N(1)-(5-phospho-D-ribosyl)glycinamide (formate route): step 1/1. Involved in the de novo purine biosynthesis. Catalyzes the transfer of formate to 5-phospho-ribosyl-glycinamide (GAR), producing 5-phospho-ribosyl-N-formylglycinamide (FGAR). Formate is provided by PurU via hydrolysis of 10-formyl-tetrahydrofolate. In Mannheimia haemolytica (Pasteurella haemolytica), this protein is Formate-dependent phosphoribosylglycinamide formyltransferase.